Consider the following 485-residue polypeptide: Glutamyl-tRNA(Gln) amidotransferase subunit A (485 aa).

Catalysis depends on charge relay system residues K79 and S154. Residue S178 is the Acyl-ester intermediate of the active site.

Belongs to the amidase family. GatA subfamily. Heterotrimer of A, B and C subunits.

The catalysed reaction is L-glutamyl-tRNA(Gln) + L-glutamine + ATP + H2O = L-glutaminyl-tRNA(Gln) + L-glutamate + ADP + phosphate + H(+). Allows the formation of correctly charged Gln-tRNA(Gln) through the transamidation of misacylated Glu-tRNA(Gln) in organisms which lack glutaminyl-tRNA synthetase. The reaction takes place in the presence of glutamine and ATP through an activated gamma-phospho-Glu-tRNA(Gln). This Clostridium botulinum (strain Eklund 17B / Type B) protein is Glutamyl-tRNA(Gln) amidotransferase subunit A.